Here is a 426-residue protein sequence, read N- to C-terminus: MYVLKNGQVLNASGELENKDVLIQNGKVNLIADSIEVTSGEEFDATGKLIAPGFIDVHVHLREPGGEHKETILTGTQAAARGGYTTICSMPNTKPVPDSKEVMESLQAKIKETAKVRVLPYASITTSLGTDELVDFEALKEAGAFAFTDDGVGVQLAGTMYEAMKRAAALDMAIVAHCEDNSLIYGGVVHDGIFAEKEGLKGIPNIAESVQIARDVLLAEAAGCHYHVCHISTKESVRVVRDAKRAGIRVTAEVSPHHLILDEEAIPGNDGNWKMNPPLRSKEDRAALLEGLLDGTIDFIATDHAPHAAEEKNVPMEQAAFGIVGLETAFPLLYTHFVKTKEWTLKQLIDWMTVKPAECFKLPYGKLEEGSVADIVVLDLEKEANIDPATFYSKGKNTPFVGETCIGWPVATFSEGTLVYNEGEIK.

Residues histidine 58 and histidine 60 each coordinate Zn(2+). Residues 60-62 and asparagine 92 each bind substrate; that span reads HLR. Zn(2+)-binding residues include aspartate 150, histidine 177, and histidine 230. Asparagine 276 contributes to the substrate binding site. Zn(2+) is bound at residue aspartate 303. Aspartate 303 is a catalytic residue. Residues histidine 307 and 321–322 contribute to the substrate site; that span reads FG.

This sequence belongs to the metallo-dependent hydrolases superfamily. DHOase family. Class I DHOase subfamily. Zn(2+) is required as a cofactor.

It carries out the reaction (S)-dihydroorotate + H2O = N-carbamoyl-L-aspartate + H(+). It functions in the pathway pyrimidine metabolism; UMP biosynthesis via de novo pathway; (S)-dihydroorotate from bicarbonate: step 3/3. Functionally, catalyzes the reversible cyclization of carbamoyl aspartate to dihydroorotate. In Listeria monocytogenes serotype 4b (strain CLIP80459), this protein is Dihydroorotase.